Reading from the N-terminus, the 381-residue chain is Creatine kinase B-type (381 aa).

A Phosphoserine modification is found at Ser4. Residues 11–98 (KLRFPAEDEF…FDPIIEDRHG (88 aa)) enclose the Phosphagen kinase N-terminal domain. Thr35 carries the phosphothreonine modification. A Glycyl lysine isopeptide (Lys-Gly) (interchain with G-Cter in ubiquitin) cross-link involves residue Lys45. A creatine-binding site is contributed by Val72. Residues 96–110 (RHGGYKPSDEHKTDL) show a composition bias toward basic and acidic residues. The tract at residues 96 to 122 (RHGGYKPSDEHKTDLNPDNLQGGDDLD) is disordered. Residues Lys101 and Lys107 each participate in a glycyl lysine isopeptide (Lys-Gly) (interchain with G-Cter in ubiquitin) cross-link. Tyr125 carries the post-translational modification Phosphotyrosine. The region spanning 125 to 367 (YVLSSRVRTG…KLLIEMEQRL (243 aa)) is the Phosphagen kinase C-terminal domain. ATP-binding positions include 128 to 132 (SSRVR), Arg130, Arg132, and His191. The interval 130–138 (RVRTGRSIR) is internal MTS-like signal. Ser199 is modified (phosphoserine). Position 232 (Glu232) interacts with creatine. ATP is bound at residue Arg236. The residue at position 269 (Tyr269) is a 3'-nitrotyrosine. A creatine-binding site is contributed by Ser285. Arg292 is an ATP binding site. At Ser309 the chain carries Phosphoserine. ATP contacts are provided by residues Arg320, 320 to 325 (RGTGGV), and Asp335. Thr322 carries the post-translational modification Phosphothreonine. Residue Lys381 forms a Glycyl lysine isopeptide (Lys-Gly) (interchain with G-Cter in ubiquitin) linkage.

Belongs to the ATP:guanido phosphotransferase family. In terms of assembly, dimer of identical or non-identical chains, which can be either B (brain type) or M (muscle type). With MM being the major form in skeletal muscle and myocardium, MB existing in myocardium, and BB existing in many tissues, especially brain. Interacts with SLC12A6 (via C-terminus); the interaction may be required for SLC12A6 potassium-chloride cotransport activity. In terms of processing, ubiquitinated by the ECS(ASB9) complex, leading to its degradation by the proteasome.

It is found in the cytoplasm. It localises to the cytosol. The protein resides in the mitochondrion. Its subcellular location is the cell membrane. It catalyses the reaction creatine + ATP = N-phosphocreatine + ADP + H(+). Its function is as follows. Reversibly catalyzes the transfer of phosphate between ATP and various phosphogens (e.g. creatine phosphate). Creatine kinase isoenzymes play a central role in energy transduction in tissues with large, fluctuating energy demands, such as skeletal muscle, heart, brain and spermatozoa. Acts as a key regulator of adaptive thermogenesis as part of the futile creatine cycle: localizes to the mitochondria of thermogenic fat cells and acts by mediating phosphorylation of creatine to initiate a futile cycle of creatine phosphorylation and dephosphorylation. During the futile creatine cycle, creatine and N-phosphocreatine are in a futile cycle, which dissipates the high energy charge of N-phosphocreatine as heat without performing any mechanical or chemical work. The polypeptide is Creatine kinase B-type (Homo sapiens (Human)).